We begin with the raw amino-acid sequence, 365 residues long: Protein BZR1 homolog 2 (365 aa).

The segment covering 1–30 (MATGGGGGGGGMGGGGVGGGAGAAGVGVGG) has biased composition (gly residues). 4 disordered regions span residues 1-45 (MATG…KRRE), 113-154 (SPSP…NMAN), 191-236 (SAPV…TPPS), and 344-365 (HEDS…RAAA). The interval 31–113 (RMPTWREREN…RMEVIGCSVS (83 aa)) is required for DNA-binding. The segment covering 113 to 144 (SPSPCSSYQPSPRASYNASPTSSSFPSGASSP) has biased composition (low complexity). Polar residues-rich tracts occupy residues 215 to 233 (SNVQ…VNST) and 356 to 365 (LGSSRTRAAA).

It belongs to the BZR/LAT61 family. As to quaternary structure, interacts with PUB24.

May function in brassinosteroid signaling. The protein is Protein BZR1 homolog 2 of Oryza sativa subsp. japonica (Rice).